A 151-amino-acid chain; its full sequence is MVAKRQVSVKSIKRKARKAQKAITGRAKEFSYRGHSLEELQNMELNELLPLLPARARRSYSRQMNHEQEKLYEKLLGDKENIKTHVRDLIVLPQFVGKTIELYNGNSYIKFEIKPEMIGHYLGEFALTRKEVKHSGPGVGATRSSKFLPLK.

It belongs to the universal ribosomal protein uS19 family.

Functionally, protein S19 forms a complex with S13 that binds strongly to the 16S ribosomal RNA. This chain is Small ribosomal subunit protein uS19, found in Picrophilus torridus (strain ATCC 700027 / DSM 9790 / JCM 10055 / NBRC 100828 / KAW 2/3).